Here is a 324-residue protein sequence, read N- to C-terminus: Arginase (324 aa).

Positions 115, 143, 145, and 147 each coordinate Mn(2+). Residues 145-149 (HADIN), 156-158 (SGN), and D202 each bind substrate. Residues D249 and D251 each coordinate Mn(2+). 2 residues coordinate substrate: T263 and E294.

It belongs to the arginase family. In terms of assembly, homotrimer. Mn(2+) is required as a cofactor.

It catalyses the reaction L-arginine + H2O = urea + L-ornithine. It participates in nitrogen metabolism; urea cycle; L-ornithine and urea from L-arginine: step 1/1. In Emericella nidulans (strain FGSC A4 / ATCC 38163 / CBS 112.46 / NRRL 194 / M139) (Aspergillus nidulans), this protein is Arginase (agaA).